The sequence spans 551 residues: Tetrachloroethene reductive dehalogenase (551 aa).

The segment at residues 1-39 is a signal peptide (tat-type signal); sequence MGEINRRNFLKVSILGAAAAAVASASAVKGMVSPLVADA. The 4Fe-4S ferredoxin-type 1 domain occupies 411 to 440; that stretch reads PRKFGVREFCRLCKKCADACPAQAISHEKD. C420, C423, C426, C430, C467, C478, C481, and C485 together coordinate [4Fe-4S] cluster. A 4Fe-4S ferredoxin-type 2 domain is found at 478–496; sequence CSNCVAVCSWNKVETWNHD.

Belongs to the PceA family. The cofactor is [4Fe-4S] cluster. Requires corrinoid as cofactor. In terms of processing, predicted to be exported by the Tat system. The position of the signal peptide cleavage has been experimentally proven.

The protein localises to the cytoplasm. It is found in the cell membrane. The protein resides in the secreted. It carries out the reaction trichloroethene + chloride + A + H(+) = tetrachloroethene + AH2. The catalysed reaction is trichloroethene + AH2 = (Z)-1,2-dichloroethene + chloride + A + H(+). PceT is required as a chaperone for prePceA maturation. In the absence or presence of exogenous vitamin B12, the intracellular corrinoid level decreases in fumarate-grown cells and the PceA precursor forms catalytically inactive, corrinoid-free multiprotein aggregates. Exogenous vitamin B12 is not incorporated into the PceA precursor, even though it affects the transposition of the pce gene cluster. In terms of biological role, catalyzes the reductive dechlorination of tetrachloroethene (PCE) to trichloroethene (TCE) and of trichloroethene to cis-1,2-dichloroethene (DCE). Can also use various chlorinated ethanes such as tetrachloroethane, pentachloroethane and hexachloroethane. Reduced methyl viologen can act as the artificial electron donor. The chain is Tetrachloroethene reductive dehalogenase from Desulfitobacterium hafniense (strain Y51).